A 637-amino-acid polypeptide reads, in one-letter code: Early transcription factor 70 kDa subunit (637 aa).

The Helicase ATP-binding domain occupies 32–185 (RTIIDENRSV…GHIIDLMSEE (154 aa)). 45–52 (HIMGSGKT) provides a ligand contact to ATP. Residues 135–138 (DEAH) carry the DEXH box motif. In terms of domain architecture, Helicase C-terminal spans 327–507 (KFKYFINRIQ…VLPFDIKKLL (181 aa)).

This sequence belongs to the helicase family. VETF subfamily. Heterodimer of a 70 kDa and a 82 kDa subunit. Part of the early transcription complex composed of ETF, RAP94/OPG109, and the DNA-directed RNA polymerase.

Its subcellular location is the virion. Functionally, acts with RNA polymerase to initiate transcription from early gene promoters. Is recruited by the RPO-associated protein of 94 kDa RAP94/OPG109 to form the early transcription complex, which also contains the core RNA polymerase. ETF heterodimer binds to early gene promoters. The protein is Early transcription factor 70 kDa subunit (OPG118) of Homo sapiens (Human).